Consider the following 1306-residue polypeptide: Disease resistance protein Roq1 (1306 aa).

The TIR domain maps to 10 to 179; that stretch reads RSYDVFLSFR…QILKDIFDKF (170 aa). NAD(+)-binding positions include 19–24 and glycine 52; that span reads RGEDTR. Residue glutamate 86 is part of the active site. The region spanning 198–417 is the NB-ARC domain; it reads KKLSSLLRMD…IDRLKDNPEG (220 aa). LRR repeat units lie at residues 200 to 224, 252 to 275, 417 to 440, 599 to 622, 645 to 669, 670 to 693, 716 to 739, 741 to 763, 784 to 807, 808 to 831, 832 to 857, 878 to 902, 904 to 926, 927 to 949, 961 to 983, 987 to 1010, 1013 to 1036, and 1045 to 1070; these read LSSL…GVGK, LQHH…EFVD, GEIM…IFLD, PSKL…AKRL, ITNL…VGFL, KNLI…IQSE, MTHL…IEHL, SLEN…IWRF, SNCT…IGNL, TSLN…IWGL, TSLT…AINH, LDLL…IWML, FLRI…LGHL, EHLE…VARL, FAIG…VFGS, LGSV…MNQL, LEYL…SIKE, and LRIM…EYQN.

It belongs to the disease resistance TIR-NB-LRR family. As to quaternary structure, homodimer.

The enzyme catalyses NAD(+) + H2O = ADP-D-ribose + nicotinamide + H(+). It carries out the reaction NAD(+) = 2'cADPR + nicotinamide + H(+). In terms of biological role, disease resistance (R) protein that specifically recognizes the Xanthomonas and Pseudomonas effector proteins XopQ and HopQ1, and triggers cell death. An NAD(+) hydrolase (NADase): in response to activation, catalyzes cleavage of NAD(+) into ADP-D-ribose (ADPR) and nicotinamide; NAD(+) cleavage triggers a defense system that promotes cell death. Makes small amounts of 2' cyclic ADPR (2'cADPR). This Nicotiana benthamiana protein is Disease resistance protein Roq1.